Here is a 101-residue protein sequence, read N- to C-terminus: C-X-C motif chemokine 3 (101 aa).

The N-terminal stretch at 1–32 (MAPPTRRLLNAALLLLLLLMATSHQPSGTVVA) is a signal peptide. 2 cysteine pairs are disulfide-bonded: Cys37–Cys63 and Cys39–Cys79.

The protein belongs to the intercrine alpha (chemokine CxC) family.

It is found in the secreted. In terms of biological role, ligand for CXCR2. Has chemotactic activity for neutrophils. May play a role in inflammation and exert its effects on endothelial cells in an autocrine fashion. This is C-X-C motif chemokine 3 (Cxcl3) from Rattus norvegicus (Rat).